Consider the following 274-residue polypeptide: Pyrroline-5-carboxylate reductase 3 (274 aa).

Alanine 2 carries the post-translational modification N-acetylalanine.

It belongs to the pyrroline-5-carboxylate reductase family. As to quaternary structure, homodecamer; composed of 5 homodimers.

It is found in the cytoplasm. The enzyme catalyses L-proline + NADP(+) = (S)-1-pyrroline-5-carboxylate + NADPH + 2 H(+). The catalysed reaction is L-proline + NAD(+) = (S)-1-pyrroline-5-carboxylate + NADH + 2 H(+). Its pathway is amino-acid biosynthesis; L-proline biosynthesis; L-proline from L-glutamate 5-semialdehyde: step 1/1. Functionally, oxidoreductase that catalyzes the last step in proline biosynthesis, which corresponds to the reduction of pyrroline-5-carboxylate (P5C) to L-proline using NAD(P)H. Proline is synthesized from either glutamate or ornithine; both are converted to P5C, and then to proline via pyrroline-5-carboxylate reductases (PYCRs). PYCR3 is exclusively linked to the biosynthesis of proline from ornithine. The sequence is that of Pyrroline-5-carboxylate reductase 3 from Rattus norvegicus (Rat).